The chain runs to 363 residues: Dioxygenase sphC (363 aa).

Residues His183, Asp185, and His259 each contribute to the Fe cation site.

This sequence belongs to the PhyH family. Homodimer. The cofactor is Fe cation.

The enzyme catalyses sphingofungin B1 + 2-oxoglutarate + O2 = sphingofungin B + succinate + CO2. It functions in the pathway secondary metabolite biosynthesis. In terms of biological role, dioxygenase; part of the gene cluster that mediates the biosynthesis of sphingofungins, bioactive molecules acting as sphingolipid inhibitors via inhibiting serine palmitoyl transferase (SPT). Within the pathway, sphC catalyzes the hydrolxylation at C-4 to convert sphingofungin B1 into sphingofungin B as well as presphingofungin into sphingofungin B2. Sphingofungin biosynthesis starts with the PKS sphB that produces an C18 polyketide precursor 3-hydroxyoctadeca-4,10-dienoyl-ACP containing one delta-6 desaturation and one delta-12 desaturation. The aminoacyl transferase sphA uses the sphB product to produce 3-keto-presphingofungin by adding an aminomalonate molecule. SphF then reduces the C-3 ketone of 3-keto-presphingofungin which leads to presphingofungin. The cytochrome P450 monooxygenase sphH converts presphingofungin into sphingofungin B1 which is further converted to sphingofungin B by the dioxygenase sphC. SphC is also able to convert presphingofungin into sphingofungin B2. The acetyltransferase sphE acetylates sphingofungin B to produce sphingofungin C, but can also convert sphingofungin B1 into sphingofungin C1 and sphingofungin B2 into sphingofungin C2. Finally, sphingofungin C can be spontaneously converted into sphingofungin D. In Aspergillus fumigatus (strain CBS 144.89 / FGSC A1163 / CEA10) (Neosartorya fumigata), this protein is Dioxygenase sphC.